Consider the following 146-residue polypeptide: D-aminoacyl-tRNA deacylase (146 aa).

A Gly-cisPro motif, important for rejection of L-amino acids motif is present at residues 137 to 138 (GP).

Belongs to the DTD family. In terms of assembly, homodimer.

The protein localises to the cytoplasm. The enzyme catalyses glycyl-tRNA(Ala) + H2O = tRNA(Ala) + glycine + H(+). The catalysed reaction is a D-aminoacyl-tRNA + H2O = a tRNA + a D-alpha-amino acid + H(+). In terms of biological role, an aminoacyl-tRNA editing enzyme that deacylates mischarged D-aminoacyl-tRNAs. Also deacylates mischarged glycyl-tRNA(Ala), protecting cells against glycine mischarging by AlaRS. Acts via tRNA-based rather than protein-based catalysis; rejects L-amino acids rather than detecting D-amino acids in the active site. By recycling D-aminoacyl-tRNA to D-amino acids and free tRNA molecules, this enzyme counteracts the toxicity associated with the formation of D-aminoacyl-tRNA entities in vivo and helps enforce protein L-homochirality. The polypeptide is D-aminoacyl-tRNA deacylase (Bacillus thuringiensis subsp. konkukian (strain 97-27)).